Reading from the N-terminus, the 313-residue chain is Sorting nexin-20 (313 aa).

A disordered region spans residues 1 to 61; the sequence is MASPQHPGGP…MTTRELQEHW (61 aa). Position 3 is a phosphoserine (serine 3). Residues 29-38 are compositionally biased toward pro residues; sequence PPGPDLPCPG. The span at 45-55 shows a compositional bias: polar residues; sequence GPTSNSNMTTR. Positions 71–188 constitute a PX domain; that stretch reads VRLLFEIASA…DFLTRPELCE (118 aa). 4 residues coordinate a 1,2-diacyl-sn-glycero-3-phospho-(1D-myo-inositol-3-phosphate): arginine 113, serine 115, lysine 140, and arginine 154.

This sequence belongs to the sorting nexin family. Interacts with SELPLG. Interaction with SELPLG is controversial.

The protein localises to the early endosome membrane. It is found in the cell membrane. Its subcellular location is the cytoplasm. It localises to the nucleus. In terms of biological role, may play a role in cellular vesicle trafficking. Has been proposed to function as a sorting protein that targets SELPLG into endosomes, but has no effect on SELPLG internalization from the cell surface, or on SELPLG-mediated cell-cell adhesion. In Rattus norvegicus (Rat), this protein is Sorting nexin-20 (Snx20).